Consider the following 112-residue polypeptide: Tyrosine-protein phosphatase 8 (112 aa).

The region spanning 1–112 (ENSTAIVMIT…ANSEYGPVVV (112 aa)) is the Tyrosine-protein phosphatase domain.

Belongs to the protein-tyrosine phosphatase family.

It carries out the reaction O-phospho-L-tyrosyl-[protein] + H2O = L-tyrosyl-[protein] + phosphate. This is Tyrosine-protein phosphatase 8 (STY-8) from Styela plicata (Wrinkled sea squirt).